The following is a 908-amino-acid chain: Translation initiation factor IF-2 (908 aa).

Disordered regions lie at residues 123 to 154 (EEPP…EELK) and 212 to 278 (KKEP…VSEK). Positions 407-577 (ERAPIVTIMG…LFEAELLELK (171 aa)) constitute a tr-type G domain. The segment at 416–423 (GHVDHGKT) is G1. 416 to 423 (GHVDHGKT) is a GTP binding site. The G2 stretch occupies residues 441–445 (GITQH). Residues 463–466 (DTPG) form a G3 region. GTP-binding positions include 463–467 (DTPGH) and 517–520 (NKMD). Residues 517–520 (NKMD) form a G4 region. The G5 stretch occupies residues 553 to 555 (SAI).

It belongs to the TRAFAC class translation factor GTPase superfamily. Classic translation factor GTPase family. IF-2 subfamily.

The protein localises to the cytoplasm. In terms of biological role, one of the essential components for the initiation of protein synthesis. Protects formylmethionyl-tRNA from spontaneous hydrolysis and promotes its binding to the 30S ribosomal subunits. Also involved in the hydrolysis of GTP during the formation of the 70S ribosomal complex. In Amoebophilus asiaticus (strain 5a2), this protein is Translation initiation factor IF-2.